A 353-amino-acid chain; its full sequence is RNA 3'-terminal phosphate cyclase (353 aa).

Residues Gln-100 and 285–289 each bind ATP; that span reads HAADQ. His-311 functions as the Tele-AMP-histidine intermediate in the catalytic mechanism.

The protein belongs to the RNA 3'-terminal cyclase family. Type 1 subfamily.

It is found in the cytoplasm. The enzyme catalyses a 3'-end 3'-phospho-ribonucleotide-RNA + ATP = a 3'-end 2',3'-cyclophospho-ribonucleotide-RNA + AMP + diphosphate. In terms of biological role, catalyzes the conversion of 3'-phosphate to a 2',3'-cyclic phosphodiester at the end of RNA. The mechanism of action of the enzyme occurs in 3 steps: (A) adenylation of the enzyme by ATP; (B) transfer of adenylate to an RNA-N3'P to produce RNA-N3'PP5'A; (C) and attack of the adjacent 2'-hydroxyl on the 3'-phosphorus in the diester linkage to produce the cyclic end product. The biological role of this enzyme is unknown but it is likely to function in some aspects of cellular RNA processing. This Nitrosospira multiformis (strain ATCC 25196 / NCIMB 11849 / C 71) protein is RNA 3'-terminal phosphate cyclase.